Reading from the N-terminus, the 436-residue chain is GTPase Der (436 aa).

2 EngA-type G domains span residues 4–167 (PVVA…KNIP) and 176–351 (VQFC…ENHS). Residues 10-17 (GRPNVGKS), 57-61 (DTGGI), 119-122 (NKLD), 182-189 (GRPNVGKS), 229-233 (DTAGM), and 294-297 (NKWD) each bind GTP. A KH-like domain is found at 352-436 (LRVQTNVLND…PIKIFARARK (85 aa)).

This sequence belongs to the TRAFAC class TrmE-Era-EngA-EngB-Septin-like GTPase superfamily. EngA (Der) GTPase family. Associates with the 50S ribosomal subunit.

Its function is as follows. GTPase that plays an essential role in the late steps of ribosome biogenesis. In Bacillus velezensis (strain DSM 23117 / BGSC 10A6 / LMG 26770 / FZB42) (Bacillus amyloliquefaciens subsp. plantarum), this protein is GTPase Der.